A 126-amino-acid polypeptide reads, in one-letter code: Large ribosomal subunit protein bL12 (126 aa).

Belongs to the bacterial ribosomal protein bL12 family. In terms of assembly, homodimer. Part of the ribosomal stalk of the 50S ribosomal subunit. Forms a multimeric L10(L12)X complex, where L10 forms an elongated spine to which 2 to 4 L12 dimers bind in a sequential fashion. Binds GTP-bound translation factors.

Its function is as follows. Forms part of the ribosomal stalk which helps the ribosome interact with GTP-bound translation factors. Is thus essential for accurate translation. The polypeptide is Large ribosomal subunit protein bL12 (Legionella pneumophila (strain Paris)).